We begin with the raw amino-acid sequence, 365 residues long: Crh-like protein ARB_03382 (365 aa).

The signal sequence occupies residues 1 to 25; it reads MMASRRISVLSSLGLFACLLSPVVA. At 26–302 the chain is on the extracellular side; sequence QTFTYCNPLE…RWRELPTAAK (277 aa). The cysteines at positions 31 and 39 are disulfide-linked. N-linked (GlcNAc...) asparagine glycosylation is found at Asn48, Asn54, Asn63, and Asn77. One can recognise a GH16 domain in the interval 50–243; that stretch reads TTYLNSSLNP…YEKTPYIMSV (194 aa). Glu125 acts as the Nucleophile in catalysis. Residue Glu129 is the Proton donor of the active site. Chitin is bound at residue Glu129. Residues Asn147 and Asn168 are each glycosylated (N-linked (GlcNAc...) asparagine). The chitin site is built by Arg209 and Trp213. The chain crosses the membrane as a helical span at residues 303-323; the sequence is IAIFASIGGLVILGMAIIAFC. Topologically, residues 324-365 are cytoplasmic; it reads CVKQRRAGRREFSMENSKFVEDQNNVMAMRTQWNHKYKPVGS.

Belongs to the glycosyl hydrolase 16 family. CRH1 subfamily.

The protein resides in the membrane. It carries out the reaction Random endo-hydrolysis of N-acetyl-beta-D-glucosaminide (1-&gt;4)-beta-linkages in chitin and chitodextrins.. Its function is as follows. Dual chitinase/transglycosylase that plays a role in cell wall architecture. Chitinase and transglycosylase activities are coupled. Required for the polysaccharide cross-linking at the septa and the cell wall. More specifically, transfers chitin to 1,6-beta-glucan in the cell wall. Plays an important role in fungal pathogenesis. Involved in cell wall assembly and regeneration, filamentation, and adherence to host cells. The sequence is that of Crh-like protein ARB_03382 from Arthroderma benhamiae (strain ATCC MYA-4681 / CBS 112371) (Trichophyton mentagrophytes).